We begin with the raw amino-acid sequence, 696 residues long: MSESTEAPTPAPGHVREHWNELAEEVRQHQFRYYVRDAPIISDGEFDVLLGELNDLENQYPDLRTPDSPTQLVGGGFSTDFASADHLERMLSLDNVFATDELRTWISRVEQETGPDLHYLCEVKIDGVALNLVYENGRLDRAATRGDGRTGEEVTLNARTIDDIPEKLTGTDEYPIPALLEVRGEVFFRLEDFAALNAALVEEGKAPFANPRNSAAGSLRQKNPAVTARRRLGMICHGLGRSEGFEPVSQYDAYTALAAWGLPVSTHTARVTGADAVVDRVQYWGEHRHDVEHEIDGLVVKVDETSLQRRLGSTSRAPRWAIAYKYPPEEATTKLLDIRVNVGRTGRVTPFAYMEPVTVAGSTVSLATLHNGSEVKRKGVLIGDTVVLRKAGDVIPEVLGPVVDARTGDEYEFVMPTHCPECDTPLAPAKEGDADIRCPNQQYCPAQLRERVFHVAGRGAFDIEVLGYEAATSLLEAKAIGDEGDLFSLTEDDLLKTSLFRTKAGGLSANGRRLLDNLDSAKDKPLWRVLVALSIRHVGPTAARALAGEFGSLARIRESSVEELAAVDGVGGTIAAAVAEWFGVDWHQQIVEKWSAAGVRMEDERDESIPRNLEGLSIVVTGSLETFSRDQAKEAILIRGGKAAGSVSKKTAFVVVGESPGSKHDKAVELGVPVLDEDGFRRLLEGGPDAVAESGV.

NAD(+) is bound by residues 43 to 47 (DGEFD), 92 to 93 (SL), and Glu-122. The active-site N6-AMP-lysine intermediate is the Lys-124. 4 residues coordinate NAD(+): Arg-145, Glu-185, Lys-301, and Lys-325. Zn(2+) is bound by residues Cys-419, Cys-422, Cys-438, and Cys-444. Residues 608–696 (SIPRNLEGLS…GPDAVAESGV (89 aa)) enclose the BRCT domain.

This sequence belongs to the NAD-dependent DNA ligase family. LigA subfamily. Mg(2+) is required as a cofactor. Mn(2+) serves as cofactor.

It catalyses the reaction NAD(+) + (deoxyribonucleotide)n-3'-hydroxyl + 5'-phospho-(deoxyribonucleotide)m = (deoxyribonucleotide)n+m + AMP + beta-nicotinamide D-nucleotide.. Its function is as follows. DNA ligase that catalyzes the formation of phosphodiester linkages between 5'-phosphoryl and 3'-hydroxyl groups in double-stranded DNA using NAD as a coenzyme and as the energy source for the reaction. It is essential for DNA replication and repair of damaged DNA. The chain is DNA ligase from Rhodococcus jostii (strain RHA1).